Reading from the N-terminus, the 318-residue chain is Ribosomal RNA small subunit methyltransferase H (318 aa).

S-adenosyl-L-methionine is bound by residues 38–40 (AGH), Asp-57, Leu-91, Asp-105, and Gln-112.

The protein belongs to the methyltransferase superfamily. RsmH family.

It localises to the cytoplasm. The catalysed reaction is cytidine(1402) in 16S rRNA + S-adenosyl-L-methionine = N(4)-methylcytidine(1402) in 16S rRNA + S-adenosyl-L-homocysteine + H(+). Functionally, specifically methylates the N4 position of cytidine in position 1402 (C1402) of 16S rRNA. This is Ribosomal RNA small subunit methyltransferase H from Clavibacter sepedonicus (Clavibacter michiganensis subsp. sepedonicus).